The chain runs to 99 residues: Ragulator complex protein LAMTOR4 (99 aa).

Position 1 is an N-acetylmethionine (Met1). At Thr2 the chain carries N-acetylthreonine; in Ragulator complex protein LAMTOR4, N-terminally processed. A Phosphoserine modification is found at Ser67.

It belongs to the LAMTOR4 family. As to quaternary structure, part of the Ragulator complex composed of LAMTOR1, LAMTOR2, LAMTOR3, LAMTOR4 and LAMTOR5. LAMTOR4 and LAMTOR5 form a heterodimer that interacts, through LAMTOR1, with a LAMTOR2, LAMTOR3 heterodimer. The Ragulator complex interacts with both the mTORC1 complex and heterodimers constituted of the Rag GTPases RagA/RRAGA, RagB/RRAGB, RagC/RRAGC and RagD/RRAGD; regulated by amino acid availability. The Ragulator complex interacts with SLC38A9; the probable amino acid sensor. Component of the lysosomal folliculin complex (LFC), composed of FLCN, FNIP1 (or FNIP2), RagA/RRAGA or RagB/RRAGB GDP-bound, RagC/RRAGC or RagD/RRAGD GTP-bound, and Ragulator. Phosphorylation at Ser-67 by PKA inhibits Ragulator complex assembly.

The protein resides in the lysosome. Its function is as follows. As part of the Ragulator complex it is involved in amino acid sensing and activation of mTORC1, a signaling complex promoting cell growth in response to growth factors, energy levels, and amino acids. Activated by amino acids through a mechanism involving the lysosomal V-ATPase, the Ragulator plays a dual role for the small GTPases Rag (RagA/RRAGA, RagB/RRAGB, RagC/RRAGC and/or RagD/RRAGD): it (1) acts as a guanine nucleotide exchange factor (GEF), activating the small GTPases Rag and (2) mediates recruitment of Rag GTPases to the lysosome membrane. Activated Ragulator and Rag GTPases function as a scaffold recruiting mTORC1 to lysosomes where it is in turn activated. This chain is Ragulator complex protein LAMTOR4 (LAMTOR4), found in Bos taurus (Bovine).